The sequence spans 340 residues: Ketol-acid reductoisomerase (NADP(+)) (340 aa).

Residues 1-183 enclose the KARI N-terminal Rossmann domain; it reads MAVTVYYDKD…GAGRTGIIET (183 aa). NADP(+)-binding positions include 26–29, Lys49, Ser54, and 84–87; these read FGSQ and DELQ. Residue His109 is part of the active site. Gly135 is a binding site for NADP(+). The 146-residue stretch at 184 to 329 folds into the KARI C-terminal knotted domain; that stretch reads TFKDETETDL…EKLRAMMPWI (146 aa). 4 residues coordinate Mg(2+): Asp192, Glu196, Glu228, and Glu232. Ser253 lines the substrate pocket.

Belongs to the ketol-acid reductoisomerase family. It depends on Mg(2+) as a cofactor.

It carries out the reaction (2R)-2,3-dihydroxy-3-methylbutanoate + NADP(+) = (2S)-2-acetolactate + NADPH + H(+). The enzyme catalyses (2R,3R)-2,3-dihydroxy-3-methylpentanoate + NADP(+) = (S)-2-ethyl-2-hydroxy-3-oxobutanoate + NADPH + H(+). It functions in the pathway amino-acid biosynthesis; L-isoleucine biosynthesis; L-isoleucine from 2-oxobutanoate: step 2/4. The protein operates within amino-acid biosynthesis; L-valine biosynthesis; L-valine from pyruvate: step 2/4. Its function is as follows. Involved in the biosynthesis of branched-chain amino acids (BCAA). Catalyzes an alkyl-migration followed by a ketol-acid reduction of (S)-2-acetolactate (S2AL) to yield (R)-2,3-dihydroxy-isovalerate. In the isomerase reaction, S2AL is rearranged via a Mg-dependent methyl migration to produce 3-hydroxy-3-methyl-2-ketobutyrate (HMKB). In the reductase reaction, this 2-ketoacid undergoes a metal-dependent reduction by NADPH to yield (R)-2,3-dihydroxy-isovalerate. In Campylobacter hominis (strain ATCC BAA-381 / DSM 21671 / CCUG 45161 / LMG 19568 / NCTC 13146 / CH001A), this protein is Ketol-acid reductoisomerase (NADP(+)).